A 632-amino-acid polypeptide reads, in one-letter code: DNA mismatch repair protein MutL (632 aa).

It belongs to the DNA mismatch repair MutL/HexB family.

In terms of biological role, this protein is involved in the repair of mismatches in DNA. It is required for dam-dependent methyl-directed DNA mismatch repair. May act as a 'molecular matchmaker', a protein that promotes the formation of a stable complex between two or more DNA-binding proteins in an ATP-dependent manner without itself being part of a final effector complex. This chain is DNA mismatch repair protein MutL, found in Pseudomonas putida (strain GB-1).